The following is a 328-amino-acid chain: Formimidoylglutamase (328 aa).

Residues H133, D159, H161, D163, D253, and D255 each contribute to the Mn(2+) site.

Belongs to the arginase family. The cofactor is Mn(2+).

The catalysed reaction is N-formimidoyl-L-glutamate + H2O = formamide + L-glutamate. It participates in amino-acid degradation; L-histidine degradation into L-glutamate; L-glutamate from N-formimidoyl-L-glutamate (hydrolase route): step 1/1. In terms of biological role, catalyzes the conversion of N-formimidoyl-L-glutamate to L-glutamate and formamide. The protein is Formimidoylglutamase of Streptococcus pyogenes serotype M1.